We begin with the raw amino-acid sequence, 411 residues long: Alpha-1-antitrypsin 1-6 (411 aa).

Positions 1 to 25 (MTTPFSSHGLLLLVGLCCLLLITKT) are cleaved as a signal peptide. Residues Asn-50, Asn-89, Asn-101, and Asn-164 are each glycosylated (N-linked (GlcNAc...) asparagine).

This sequence belongs to the serpin family. As to expression, expressed predominantly in epididymis where it is found in the epithelial cells of the caput, corpus and cauda epididymis.

Its subcellular location is the secreted. Functionally, inhibitor of serine proteases. This Mus musculus (Mouse) protein is Alpha-1-antitrypsin 1-6.